Reading from the N-terminus, the 341-residue chain is Probable alcohol acetyltransferase (341 aa).

The N-terminal 40 residues, 1–40, are a transit peptide targeting the mitochondrion; that stretch reads MFASRILRNSAQTLKTELPHKETIKMAYDLHKPRSTAIRH. An AB hydrolase-1 domain is found at 48 to 301; it reads PILFLHGIFG…NSNHDILDQR (254 aa). Active-site charge relay system residues include serine 121, aspartate 145, and histidine 295.

This sequence belongs to the AB hydrolase superfamily.

The protein localises to the mitochondrion. In terms of biological role, probable alcohol acetyltransferase that uses acetyl-CoA to synthesize acetate esters from various alcohols. Not involved in the synthesis of ethyl acetate. The chain is Probable alcohol acetyltransferase (EAT2) from Wickerhamomyces anomalus (strain ATCC 58044 / CBS 1984 / NCYC 433 / NRRL Y-366-8) (Yeast).